We begin with the raw amino-acid sequence, 541 residues long: Zinc finger protein 503 (541 aa).

Positions 1-18 (MSNSPLGSGSRISHFTTE) are enriched in polar residues. Disordered stretches follow at residues 1–49 (MSNS…QAGR) and 97–255 (TCSQ…SSSV). Residues 137 to 157 (AEDKSSFKPYSKHPDKKDQSA) show a composition bias toward basic and acidic residues. Residues 236-255 (SLSAAPSPTPASSSSSSSSV) are compositionally biased toward low complexity. The C2H2-type zinc-finger motif lies at 411-439 (HVCNWVSATGPCDKRFSSSEELLGHLRTH). A disordered region spans residues 474-511 (GASPGPLTLRSPHHHPLGLSSSRYHPYSKSPLPSGGAP).

It belongs to the Elbow/Noc family.

It is found in the nucleus. In terms of biological role, may function as a transcriptional repressor. The polypeptide is Zinc finger protein 503 (znf503) (Xenopus tropicalis (Western clawed frog)).